The sequence spans 126 residues: Putative regulator AldR (126 aa).

Belongs to the RutC family.

In terms of biological role, implicated in the regulation of isoleucine biosynthesis. This is Putative regulator AldR (aldR) from Lactococcus lactis subsp. lactis (strain IL1403) (Streptococcus lactis).